We begin with the raw amino-acid sequence, 860 residues long: Protein argonaute-2 (860 aa).

The disordered stretch occupies residues 1 to 30 (MYSGAGPALAPPAPPPPPIQGYAFKPPPRP). Position 2 is a 3'-nitrotyrosine (Tyr-2). Pro residues predominate over residues 9 to 30 (LAPPAPPPPPIQGYAFKPPPRP). Residues 230–349 (PVIEFVCEVL…LPLEVCNIVA (120 aa)) enclose the PAZ domain. Residues 312-317 (YFKDRH) form an interaction with guide RNA region. A Phosphoserine modification is found at Ser-388. A Piwi domain is found at 518-819 (LVVVILPGKT…VAFRARYHLV (302 aa)). Residues 525–567 (GKTPVYAEVKRVGDTVLGMATQCVQMKNVQRTTPQTLSNLWLK) are interaction with guide RNA. Residues 588 to 591 (FQQP) form an interaction with GW182 family members region. Asp-598 serves as a coordination point for a divalent metal cation. Residues 651–661 (LIQFYKSTRFK) are interaction with GW182 family members. Asp-670 provides a ligand contact to a divalent metal cation. Pro-701 is subject to 4-hydroxyproline. Interaction with guide RNA regions lie at residues 710 to 711 (KR), 754 to 762 (HAGIQGTSR), and 791 to 813 (YVRC…VAFR). A divalent metal cation is bound at residue His-808. Ser-825, Ser-829, Ser-832, and Ser-835 each carry phosphoserine.

Belongs to the argonaute family. Ago subfamily. As to quaternary structure, interacts with DICER1 through its Piwi domain and with TARBP2 during assembly of the RNA-induced silencing complex (RISC). Together, DICER1, AGO2 and TARBP2 constitute the trimeric RISC loading complex (RLC), or micro-RNA (miRNA) loading complex (miRLC). Within the RLC/miRLC, DICER1 and TARBP2 are required to process precursor miRNAs (pre-miRNAs) to mature miRNAs and then load them onto AGO2. AGO2 bound to the mature miRNA constitutes the minimal RISC and may subsequently dissociate from DICER1 and TARBP2. Note however that the term RISC has also been used to describe the trimeric RLC/miRLC. The formation of RISC complexes containing siRNAs rather than miRNAs appears to occur independently of DICER1. Interacts with AGO1. Also interacts with DDB1, DDX5, DDX6, DDX20, DHX30, DHX36, DDX47, DHX9, ELAVL, FXR1, GEMIN4, HNRNPF, IGF2BP1, ILF3, IMP8, MATR3, PABPC1, PRMT5, P4HA1, P4HB, RBM4, SART3, TNRC6A, TNRC6B, UPF1 and YBX1. Interacts with the P-body components DCP1A and XRN1. Associates with polysomes and messenger ribonucleoproteins (mNRPs). Interacts with RBM4; the interaction is modulated under stress-induced conditions, occurs under both cell proliferation and differentiation conditions and in an RNA- and phosphorylation-independent manner. Interacts with LIMD1, WTIP and AJUBA. Interacts with TRIM71; the interaction increases in presence of RNA. Interacts with APOBEC3G in an RNA-dependent manner. Interacts with APOBEC3A, APOBEC3C, APOBEC3F and APOBEC3H. Interacts with DICER1, TARBP2, EIF6, MOV10 and RPL7A (60S ribosome subunit); they form a large RNA-induced silencing complex (RISC). Interacts with FMR1. Interacts with ZFP36. Interacts with RC3H1; the interaction is RNA independent. Found in a complex composed of AGO2, CHD7 and ARB2A. Interacts with SND1 and SYT11. Interacts with CLNK. Interacts with GARRE1. Interacts with GRB2; this interaction is important for the formation of a ternary complex containing GRB2, AGO2 and DICER1. Requires Mg(2+) as cofactor. Mn(2+) is required as a cofactor. In terms of processing, hydroxylated. 4-hydroxylation appears to enhance protein stability but is not required for miRNA-binding or endonuclease activity. Ubiquitinated on surface-exposed lysines by a SCF-like E3 ubiquitin-protein ligase complex containing ZSWIM8 during target-directed microRNA degradation (TDMD), a process that mediates degradation of microRNAs (miRNAs). Ubiquitination by the SCF-like E3 ubiquitin-protein ligase complex containing ZSWIM8 leads to its subsequent degradation, thereby exposing miRNAs for degradation. ZSWIM8 recognizes and binds AGO2 when it is engaged with a TDMD target. Post-translationally, phosphorylation at Ser-388 by AKT3; leads to up-regulate translational repression of microRNA target and down-regulate endonucleolytic cleavage. In terms of processing, a phosphorylation cycle of C-terminal serine cluster (Ser-825-Ser-835) regulates the release of target mRNAs. Target-binding leads to phosphorylation of these residues by CSNK1A1, which reduces the affinity of AGO2 for mRNA and enables target release. The ANKRD52-PPP6C phosphatase complex dephosphorylates the residues, which primes AGO2 for binding a new target.

It localises to the cytoplasm. The protein resides in the P-body. The protein localises to the nucleus. The enzyme catalyses Endonucleolytic cleavage to 5'-phosphomonoester.. Required for RNA-mediated gene silencing (RNAi) by the RNA-induced silencing complex (RISC). The 'minimal RISC' appears to include AGO2 bound to a short guide RNA such as a microRNA (miRNA) or short interfering RNA (siRNA). These guide RNAs direct RISC to complementary mRNAs that are targets for RISC-mediated gene silencing. The precise mechanism of gene silencing depends on the degree of complementarity between the miRNA or siRNA and its target. Binding of RISC to a perfectly complementary mRNA generally results in silencing due to endonucleolytic cleavage of the mRNA specifically by AGO2. Binding of RISC to a partially complementary mRNA results in silencing through inhibition of translation, and this is independent of endonuclease activity. May inhibit translation initiation by binding to the 7-methylguanosine cap, thereby preventing the recruitment of the translation initiation factor eIF4-E. May also inhibit translation initiation via interaction with EIF6, which itself binds to the 60S ribosomal subunit and prevents its association with the 40S ribosomal subunit. The inhibition of translational initiation leads to the accumulation of the affected mRNA in cytoplasmic processing bodies (P-bodies), where mRNA degradation may subsequently occur. In some cases RISC-mediated translational repression is also observed for miRNAs that perfectly match the 3' untranslated region (3'-UTR). Can also up-regulate the translation of specific mRNAs under certain growth conditions. Binds to the AU element of the 3'-UTR of the TNF (TNF-alpha) mRNA and up-regulates translation under conditions of serum starvation. Also required for transcriptional gene silencing (TGS), in which short RNAs known as antigene RNAs or agRNAs direct the transcriptional repression of complementary promoter regions. The protein is Protein argonaute-2 (AGO2) of Bos taurus (Bovine).